A 154-amino-acid chain; its full sequence is Myoglobin (154 aa).

The 147-residue stretch at 2–148 (GLSDGEWQLV…FRNDIAAKYK (147 aa)) folds into the Globin domain. Position 4 is a phosphoserine (serine 4). Histidine 65 is a nitrite binding site. Histidine 65 contributes to the O2 binding site. The residue at position 68 (threonine 68) is a Phosphothreonine. Histidine 94 provides a ligand contact to heme b.

It belongs to the globin family. As to quaternary structure, monomeric.

The protein localises to the cytoplasm. It is found in the sarcoplasm. It carries out the reaction Fe(III)-heme b-[protein] + nitric oxide + H2O = Fe(II)-heme b-[protein] + nitrite + 2 H(+). The catalysed reaction is H2O2 + AH2 = A + 2 H2O. Functionally, monomeric heme protein which primary function is to store oxygen and facilitate its diffusion within muscle tissues. Reversibly binds oxygen through a pentacoordinated heme iron and enables its timely and efficient release as needed during periods of heightened demand. Depending on the oxidative conditions of tissues and cells, and in addition to its ability to bind oxygen, it also has a nitrite reductase activity whereby it regulates the production of bioactive nitric oxide. Under stress conditions, like hypoxia and anoxia, it also protects cells against reactive oxygen species thanks to its pseudoperoxidase activity. The chain is Myoglobin (MB) from Tupaia glis (Common tree shrew).